A 323-amino-acid chain; its full sequence is Putative divalent cation/proton antiporter TMEM165 (323 aa).

The N-terminal stretch at 1-33 (MAAAARGSGRAPTRRLLVLLLLQLLWAPAGVRA) is a signal peptide. Topologically, residues 34-89 (GPEEDLSHRNQEPPAPAQQLQPQPAAVQGLEPARAEKGLTPVAPVHTNKEDAAAQT) are lumenal. Positions 35 to 44 (PEEDLSHRNQ) are enriched in basic and acidic residues. The interval 35–60 (PEEDLSHRNQEPPAPAQQLQPQPAAV) is disordered. Positions 50–59 (AQQLQPQPAA) are enriched in low complexity. A helical transmembrane segment spans residues 90–110 (NLGFIHAFVAAISVIIVSELG). At 111–126 (DKTFFIAAIMAMRYNR) the chain is on the cytoplasmic side. Residues 127–147 (LTVLAGAMLALALMTCLSVLF) form a helical membrane-spanning segment. Residues 148–151 (GYAT) lie on the Lumenal side of the membrane. The helical transmembrane segment at 152–172 (TVIPRVYTYYVSTALFAIFGI) threads the bilayer. Topologically, residues 173-227 (RMLREGLKMSPDEGQEELEEVQAELKKKDEEFQRTKLLNGPDVETGTSTAIPQKK) are cytoplasmic. The stretch at 184-211 (DEGQEELEEVQAELKKKDEEFQRTKLLN) forms a coiled coil. The chain crosses the membrane as a helical span at residues 228–248 (WLHFISPIFVQALTLTFLAEW). Residues 249–266 (GDRSQLTTIVLAAREDPY) are Lumenal-facing. Residues 267–287 (GVAVGGTVGHCLCTGLAVIGG) form a helical membrane-spanning segment. Topologically, residues 288 to 298 (RMIAQKISVRT) are cytoplasmic. A helical transmembrane segment spans residues 299 to 319 (VTIIGGIVFLAFAFSALFISP). The Lumenal portion of the chain corresponds to 320–323 (ESGF).

The protein belongs to the GDT1 family. Expressed in mammary epithelial cells (at protein level).

It localises to the golgi apparatus membrane. It carries out the reaction Ca(2+)(in) + n H(+)(out) = Ca(2+)(out) + n H(+)(in). It catalyses the reaction Mn(2+)(in) + n H(+)(out) = Mn(2+)(out) + n H(+)(in). In terms of biological role, putative divalent cation:proton antiporter that exchanges calcium or manganese ions for protons across the Golgi membrane. Mediates the reversible transport of calcium or manganese to the Golgi lumen driven by the proton gradient and possibly the membrane potential generated by V-ATPase. Provides calcium or manganese cofactors to resident Golgi enzymes and contributes to the maintenance of an acidic luminal Golgi pH required for proper functioning of the secretory pathway. Promotes Ca(2+) storage within the Golgi lumen of the mammary epithelial cells to be then secreted into milk. The transport mechanism and stoichiometry remains to be elucidated. The chain is Putative divalent cation/proton antiporter TMEM165 from Mus musculus (Mouse).